The primary structure comprises 362 residues: Spermidine/putrescine import ATP-binding protein PotA (362 aa).

An ABC transporter domain is found at 4–235 (IKLDHITKQY…PVNDFVARFI (232 aa)). 37–44 (GPSGSGKT) contributes to the ATP binding site.

The protein belongs to the ABC transporter superfamily. Spermidine/putrescine importer (TC 3.A.1.11.1) family. The complex is composed of two ATP-binding proteins (PotA), two transmembrane proteins (PotB and PotC) and a solute-binding protein (PotD).

The protein resides in the cell membrane. It carries out the reaction ATP + H2O + polyamine-[polyamine-binding protein]Side 1 = ADP + phosphate + polyamineSide 2 + [polyamine-binding protein]Side 1.. Part of the ABC transporter complex PotABCD involved in spermidine/putrescine import. Responsible for energy coupling to the transport system. This chain is Spermidine/putrescine import ATP-binding protein PotA, found in Lactobacillus delbrueckii subsp. bulgaricus (strain ATCC BAA-365 / Lb-18).